Here is a 94-residue protein sequence, read N- to C-terminus: Cytochrome c-551 (94 aa).

Residues 1 to 14 form the signal peptide; sequence MAFTAMTVAPSALA. Residues Cys-24, Cys-27, His-28, and Met-73 each coordinate heme c.

In terms of processing, binds 1 heme c group covalently per subunit.

Efficiently couple electron transfer between the cytochrome bc1 complex and the photosynthetic reaction center. This is Cytochrome c-551 from Allochromatium vinosum (strain ATCC 17899 / DSM 180 / NBRC 103801 / NCIMB 10441 / D) (Chromatium vinosum).